Here is a 501-residue protein sequence, read N- to C-terminus: Zinc finger protein 704 (501 aa).

Positions 80 to 96 are enriched in polar residues; that stretch reads SLKSTCNGGQRDGLTQG. Disordered stretches follow at residues 80-138, 183-203, and 216-267; these read SLKS…HTRS, PLVRSPPVKVSEGLNGSWKDG, and WSWS…LFDE. The span at 115 to 137 shows a compositional bias: basic and acidic residues; it reads EEPRVLEHKRTGRALETEKDHTR. A C2H2-type zinc finger spans residues 281–306; the sequence is FKCLWKNCGKVLSTAAGIQRHIRTVH. Disordered stretches follow at residues 340 to 380, 398 to 419, 427 to 446, and 453 to 472; these read SLSP…SRSA, PVTIPSTSSTGFTPSSSSFSIS, FTGTSASPTHSRTQGFGEQH, and LSSPPRAAGSLSRKSRGEGK. Positions 368-380 are enriched in low complexity; the sequence is SESSSSTPLSRSA. A CR1 motif is present at residues 472–476; sequence KKCRK. The short motif at 490-494 is the CR2 element; that stretch reads CRWKK.

It localises to the nucleus. Transcription factor. In Danio rerio (Zebrafish), this protein is Zinc finger protein 704 (znf704).